A 360-amino-acid polypeptide reads, in one-letter code: MTPFLRQQLSRQALRLAEIDAALADPKVCSQIGTLRSLNREHARVSALVDRWQRYEQREQDLAGAQELLDEPEMAELARAEIGAAQADLDRLDSELLTALMPRDADDDRNAFVEIRAGTGGEESALFAADLARMYLRHAERRGWKTELMSESVSDLGGYKDVVLHIIGDAVFEALKYESGGHRVQRVPATEAQGRIHTSACTVAVLAEADEAEEVSLNPAELRIDTYRASGAGGQHINKTDSAVRVTHLPTGLVAECQDDRSQHRNKARALAVLAARLRDRVRQEQAAKDAAARKSLIGSGDRSDRIRTYNFPQGRLTDHRINLTLYKLGAVLEGDLDEVIGALQAAHAAEQLAELETQA.

Glutamine 235 carries the N5-methylglutamine modification.

This sequence belongs to the prokaryotic/mitochondrial release factor family. Post-translationally, methylated by PrmC. Methylation increases the termination efficiency of RF1.

It localises to the cytoplasm. In terms of biological role, peptide chain release factor 1 directs the termination of translation in response to the peptide chain termination codons UAG and UAA. This chain is Peptide chain release factor 1, found in Leptothrix cholodnii (strain ATCC 51168 / LMG 8142 / SP-6) (Leptothrix discophora (strain SP-6)).